Consider the following 327-residue polypeptide: MFPSRRKAAQLPWEDGRSGLLSGGLPRKCSVFHLFVACLSLGFFSLLWLQLSCSGDVARAVRGQGQETSGPPRACPPEPPPEHWEEDASWGPHRLAVLVPFRERFEELLVFVPHMRRFLSRKKIRHHIYVLNQVDHFRFNRAALINVGFLESSNSTDYIAMHDVDLLPLNEELDYGFPEAGPFHVASPELHPLYHYKTYVGGILLLSKQHYRLCNGMSNRFWGWGREDDEFYRRIKGAGLQLFRPSGITTGYKTFRHLHDPAWRKRDQKRIAAQKQEQFKVDREGGLNTVKYHVASRTALSVGGAPCTVLNIMLDCDKTATPWCTFS.

Topologically, residues 1–30 (MFPSRRKAAQLPWEDGRSGLLSGGLPRKCS) are cytoplasmic. A helical; Signal-anchor for type II membrane protein membrane pass occupies residues 31–51 (VFHLFVACLSLGFFSLLWLQL). Over 52–327 (SCSGDVARAV…KTATPWCTFS (276 aa)) the chain is Lumenal. The tract at residues 63-87 (GQGQETSGPPRACPPEPPPEHWEED) is disordered. UDP-alpha-D-galactose contacts are provided by residues 100-104 (PFRER) and 139-141 (FNR). An N-linked (GlcNAc...) asparagine glycan is attached at Asn154. Residues 164 to 165 (VD), Tyr194, and Trp224 each bind UDP-alpha-D-galactose. A Mn(2+)-binding site is contributed by Asp165. 226–229 (REDD) serves as a coordination point for N-acetyl-D-glucosamine. Mn(2+) is bound at residue His257. UDP-alpha-D-galactose-binding positions include 257 to 259 (HLH) and Arg266. Cys316 and Cys324 are joined by a disulfide.

This sequence belongs to the glycosyltransferase 7 family. Requires Mn(2+) as cofactor. High expression in heart, pancreas and liver, medium in placenta and kidney, low in brain, skeletal muscle and lung.

It is found in the golgi apparatus. The protein localises to the golgi stack membrane. The enzyme catalyses 3-O-(beta-D-xylosyl)-L-seryl-[protein] + UDP-alpha-D-galactose = 3-O-(beta-D-galactosyl-(1-&gt;4)-beta-D-xylosyl)-L-seryl-[protein] + UDP + H(+). Its pathway is protein modification; protein glycosylation. In terms of biological role, required for the biosynthesis of the tetrasaccharide linkage region of proteoglycans, especially for small proteoglycans in skin fibroblasts. This is Beta-1,4-galactosyltransferase 7 (B4GALT7) from Homo sapiens (Human).